We begin with the raw amino-acid sequence, 149 residues long: Altered inheritance of mitochondria protein 11 (149 aa).

2 helical membrane-spanning segments follow: residues 29 to 48 (MMRFIGSTAVTLISCRLAIT) and 79 to 101 (LVLATGITVGTLSMLVSGSCWIW).

This sequence belongs to the AIM11 family.

Its subcellular location is the membrane. This is Altered inheritance of mitochondria protein 11 (AIM11) from Vanderwaltozyma polyspora (strain ATCC 22028 / DSM 70294 / BCRC 21397 / CBS 2163 / NBRC 10782 / NRRL Y-8283 / UCD 57-17) (Kluyveromyces polysporus).